A 640-amino-acid chain; its full sequence is MPTITLPDGSQRSFDHVVSVADVALSIGAGLAKATVAGKVDGKLVDACDLIENDASLQIITPKDQEGLEIIRHSCAHLVGHAVKQLYPTAKMVIGPVIDDGFYYDIAYERPFTPDDMAAIEQRMQQLIEKDYDVIKKVTPRAEVIEVFTARHEDYKLRLVEDMPNEQAMGLYYHEEYVDMCRGPHVPNTRFLKSFKLTKLSGAYWRGDAKNEQLQRVYGTAWADKKQLAAYIQRIEEAEKRDHRKIGKRLGLFHTQEEAPGMVFWHPQGWTLYQVLEQYMRKVQRENGYLEIKTPQVVDRSLWEKSGHWANYADNMFTTESESRDYAIKPMNCPCHVQVFNQGLKSYRELPMRLAEFGACHRNEPSGALHGIMRVRGFTQDDAHIFCTEDQMQAESAAFIKLTLDVYADFGFKDIELKLSTRPEKRVGSDELWERAETALASALDSAGLPYDLQPGEGAFYGPKIEFSLKDCLGRVWQCGTLQLDFNLPIRLSAEYVSEDNSRKNPVMLHRAILGSFERFIGILIEHYEGAFPAWLAPTQAVIMNITDKQADFALEVEKTLAESGFRAKSDLRNEKIGFKIREHTLLKVPYLLVIGDREVEMQTVAVRTREGADLGSMPVAQFAEFLAQAVSRRGRQDTE.

The TGS domain occupies 1 to 61; it reads MPTITLPDGS…ENDASLQIIT (61 aa). The catalytic stretch occupies residues 242 to 533; it reads DHRKIGKRLG…LIEHYEGAFP (292 aa). 3 residues coordinate Zn(2+): Cys-333, His-384, and His-510.

Belongs to the class-II aminoacyl-tRNA synthetase family. Homodimer. Zn(2+) is required as a cofactor.

The protein resides in the cytoplasm. The catalysed reaction is tRNA(Thr) + L-threonine + ATP = L-threonyl-tRNA(Thr) + AMP + diphosphate + H(+). In terms of biological role, catalyzes the attachment of threonine to tRNA(Thr) in a two-step reaction: L-threonine is first activated by ATP to form Thr-AMP and then transferred to the acceptor end of tRNA(Thr). Also edits incorrectly charged L-seryl-tRNA(Thr). The chain is Threonine--tRNA ligase from Pseudomonas savastanoi pv. phaseolicola (strain 1448A / Race 6) (Pseudomonas syringae pv. phaseolicola (strain 1448A / Race 6)).